The following is a 351-amino-acid chain: Cysteine-rich receptor-like protein kinase 45 (351 aa).

One can recognise a Protein kinase domain in the interval 37-287 (NDFSELVGRG…EILRYIHIAL (251 aa)). Residues 43-51 (VGRGGFGFV) and Lys65 each bind ATP. Tyr110 carries the post-translational modification Phosphotyrosine. Asp162 acts as the Proton acceptor in catalysis. Phosphothreonine is present on residues Thr197 and Thr202. Phosphotyrosine is present on Tyr210.

This sequence belongs to the protein kinase superfamily. Ser/Thr protein kinase family. CRK subfamily. In terms of assembly, interacts with CRK36. In terms of processing, autophosphorylated and phosphorylated by CRK36.

The protein localises to the cytoplasm. Its subcellular location is the cytosol. The enzyme catalyses L-seryl-[protein] + ATP = O-phospho-L-seryl-[protein] + ADP + H(+). It catalyses the reaction L-threonyl-[protein] + ATP = O-phospho-L-threonyl-[protein] + ADP + H(+). In terms of biological role, forms a complex with CRK36 that may negatively control abscisic acid (ABA) and osmotic stress signal transduction. Involved in plant response to ABA during seed germination, early seedling growth and responses to abiotic stresses by inducing the expression of ABA-responsive genes and stress-inducible genes. Acts as a positive regulator in disease resistance, downstream of NPR1 and WRKY70. This is Cysteine-rich receptor-like protein kinase 45 from Arabidopsis thaliana (Mouse-ear cress).